Reading from the N-terminus, the 838-residue chain is E3 ubiquitin-protein ligase RNF19A (838 aa).

Residues 128–351 (DFIECPLCLL…LSPSGCTFWG (224 aa)) are TRIAD supradomain. The Zn(2+) site is built by Cys-132, Cys-135, Cys-150, His-152, Cys-155, Cys-158, Cys-176, Cys-179, Cys-219, Cys-224, Cys-241, Cys-246, Cys-251, Cys-254, His-259, Cys-264, Cys-301, and Cys-304. An RING-type 1 zinc finger spans residues 132–179 (CPLCLLRHSKDRFPEIMTCHHRSCVDCLRQYLRIEISESRVNISCPEC). The IBR-type zinc-finger motif lies at 199-264 (EKYEEFMLRR…KQIWHPNQTC (66 aa)). The RING-type 2; atypical zinc-finger motif lies at 301 to 332 (CPRCAAYIIKMNDGSCNHMTCAVCGCEFCWLC). The active site involves Cys-316. Zn(2+) is bound by residues Cys-321, Cys-324, Cys-329, Cys-332, His-340, and Cys-347. The next 2 membrane-spanning stretches (helical) occupy residues 368–388 (LVGAPVGIALIAGIAIPAMII) and 424–444 (VIVSPVVAAVTVGIGVPIMLA). Disordered stretches follow at residues 622-685 (SKPS…SNMK) and 700-721 (QQSTNSSEFEAPSLSDSMPSVA). At Ser-631 the chain carries Phosphoserine. The span at 631-644 (SGSSSVDDGSAARS) shows a compositional bias: low complexity. An interaction with CASR region spans residues 660-838 (ATKWSKEATA…ELKVAIQTDI (179 aa)). A compositionally biased stretch (basic residues) spans 671-683 (KKSKSGKLRKKSN). The segment covering 700–717 (QQSTNSSEFEAPSLSDSM) has biased composition (polar residues).

The protein belongs to the RBR family. RNF19 subfamily. Interacts with UBE2L3 and UBE2L6. Also interacts with transcription factor Sp1. Interacts with SNCAIP, CASR and VCP.

The protein localises to the membrane. The protein resides in the cytoplasm. It is found in the cytoskeleton. Its subcellular location is the microtubule organizing center. It localises to the centrosome. The catalysed reaction is [E2 ubiquitin-conjugating enzyme]-S-ubiquitinyl-L-cysteine + [acceptor protein]-L-lysine = [E2 ubiquitin-conjugating enzyme]-L-cysteine + [acceptor protein]-N(6)-ubiquitinyl-L-lysine.. It functions in the pathway protein modification; protein ubiquitination. In terms of biological role, E3 ubiquitin-protein ligase which accepts ubiquitin from E2 ubiquitin-conjugating enzymes UBE2L3 and UBE2L6 in the form of a thioester and then directly transfers the ubiquitin to targeted substrates, such as SNCAIP or CASR. The chain is E3 ubiquitin-protein ligase RNF19A (RNF19A) from Sus scrofa (Pig).